Reading from the N-terminus, the 670-residue chain is RxLR effector protein PSR2 (670 aa).

The N-terminal stretch at 1–17 is a signal peptide; that stretch reads MRLQCVVLFAALTLVAA. Residues 39 to 54 carry the RxLR-dEER motif; it reads RLLRPGNPAGKEDEER. A glycan (N-linked (GlcNAc...) asparagine) is linked at Asn57. A WY1 repeat occupies 79–126; sequence KLLKWADAKKPPETVFTRLRLDKTGTQLFDNTDFPVWAAYTRSVAQTD. Residues 79–670 form a 7 X 93 AA tandem repeats region; the sequence is KLLKWADAKK…YSAKFKVRWG (592 aa). An LWY2 repeat occupies 127-217; that stretch reads SEASAVMLKT…NYMKLSNKEN (91 aa). The LWY3 repeat unit spans residues 218-308; it reads PKAQTTLIAT…KYINYYNKEN (91 aa). Residues 309 to 399 form an LWY4 repeat; the sequence is PDEKTTVLAK…KYTENFNLNK (91 aa). The stretch at 400-492 is one LWY5 repeat; the sequence is EINEQVTAIQ…KFLEKYNTAN (93 aa). An LWY6 repeat occupies 493-583; it reads PGKEQTMISG…KYLNAFNDKA (91 aa). The stretch at 584–670 is one LWY7 repeat; the sequence is PVKKALMIDT…YSAKFKVRWG (87 aa).

This sequence belongs to the RxLR effector family. In terms of assembly, interacts with host dsRNA-binding protein DRB4.

It is found in the secreted. It localises to the host cell. Secreted effector that possesses RNA silencing suppression activity by inhibiting the biogenesis of small RNAs in the host plant to promote enhanced susceptibility of host to the pathogen during infection. Interferes with secondary siRNA production by associating with host dsRNA-binding protein DRB4. Inhibits the host salicylic acid pathway during infection. The polypeptide is RxLR effector protein PSR2 (Phytophthora sojae (Soybean stem and root rot agent)).